Here is a 307-residue protein sequence, read N- to C-terminus: UPF0276 protein PM0211 (307 aa).

This sequence belongs to the UPF0276 family.

In Pasteurella multocida (strain Pm70), this protein is UPF0276 protein PM0211.